The following is a 264-amino-acid chain: Adenosylcobinamide-GDP ribazoletransferase (264 aa).

7 helical membrane passes run 10-30, 43-63, 113-133, 141-161, 183-203, 205-225, and 243-263; these read LFFI…VGYT, LVGA…AQVW, LGSY…VALY, VQAL…PVAL, VSDA…AAAW, LGAS…LAAF, and GAAQ…GVWF.

It belongs to the CobS family. The cofactor is Mg(2+).

It is found in the cell inner membrane. The enzyme catalyses alpha-ribazole + adenosylcob(III)inamide-GDP = adenosylcob(III)alamin + GMP + H(+). It carries out the reaction alpha-ribazole 5'-phosphate + adenosylcob(III)inamide-GDP = adenosylcob(III)alamin 5'-phosphate + GMP + H(+). Its pathway is cofactor biosynthesis; adenosylcobalamin biosynthesis; adenosylcobalamin from cob(II)yrinate a,c-diamide: step 7/7. In terms of biological role, joins adenosylcobinamide-GDP and alpha-ribazole to generate adenosylcobalamin (Ado-cobalamin). Also synthesizes adenosylcobalamin 5'-phosphate from adenosylcobinamide-GDP and alpha-ribazole 5'-phosphate. This chain is Adenosylcobinamide-GDP ribazoletransferase, found in Leptothrix cholodnii (strain ATCC 51168 / LMG 8142 / SP-6) (Leptothrix discophora (strain SP-6)).